A 455-amino-acid polypeptide reads, in one-letter code: MVLESLSSSLRETIRKITGSTYIDKNTVKEISKDLQRILLKADVNVQTVLNITKEMERRALEEKPPVGMAHQDYMVKIIYEELLKILGEPSNVELKPQTIMLVGLYGHGKTTSAGKLSRFFMKKGLSAGLIAADVHRYAAYEQLQQIAESVNAKFYGDPKEKDPVKIIKNGLEVLKDAQVKIIDTSGRDSLDSDLIEEIRRIKEAVKPDQVLMVIDATMGQQAGPESKAINDAVGVTGIIITKMDGTAKGGGALSAVAKMRVPIYFIGTGEHMDDMEIFDPKKFLSRLLGLGDLETLFETVKEANITEEEAQKSFEKLMTGKFNLKDMYDVWEKFSRPGLMKKLVDSLPLAKLPGSQKINDDQILTAEQKLQRYRIIMDSMTFQELENPEIINAKRITRIARGAGVREEDVRMLLKEFKAMKNNMKLMKGNRGFKKILQSNFRSGNFGLDDLGLK.

GTP contacts are provided by residues 104-111 (GLYGHGKT), 184-188 (DTSGR), and 242-245 (TKMD).

Belongs to the GTP-binding SRP family. SRP54 subfamily. Part of the signal recognition particle protein translocation system, which is composed of SRP and FtsY. Archaeal SRP consists of a 7S RNA molecule of 300 nucleotides and two protein subunits: SRP54 and SRP19.

The protein localises to the cytoplasm. The enzyme catalyses GTP + H2O = GDP + phosphate + H(+). Involved in targeting and insertion of nascent membrane proteins into the cytoplasmic membrane. Binds to the hydrophobic signal sequence of the ribosome-nascent chain (RNC) as it emerges from the ribosomes. The SRP-RNC complex is then targeted to the cytoplasmic membrane where it interacts with the SRP receptor FtsY. The polypeptide is Signal recognition particle 54 kDa protein (Thermoplasma volcanium (strain ATCC 51530 / DSM 4299 / JCM 9571 / NBRC 15438 / GSS1)).